Here is a 182-residue protein sequence, read N- to C-terminus: MNTNTIKKVVATGIGAALFIIIGMLVNIPTPIPNTNIQLQYAVLALFAVIYGPGVGFFTGFIGHALKDSIQYGSPWWTWVLVSGLLGLMIGFFAKKLAIQLSGMTKKDLLLFNVVQVIANLIGWSVVAPYGDIFFYSEPASKVFAQGFLSSLVNSITIGVGGTLLLLAYAKSRPQKGSLSKD.

Transmembrane regions (helical) follow at residues 9–29 (VVAT…VNIP), 42–62 (AVLA…TGFI), 74–94 (SPWW…GFFA), 109–129 (LLLF…VVAP), and 148–168 (FLSS…LLLA).

This sequence belongs to the UPF0397 family.

The protein resides in the cell membrane. This Streptococcus agalactiae serotype V (strain ATCC BAA-611 / 2603 V/R) protein is UPF0397 protein SAG1634.